The primary structure comprises 468 residues: ATP synthase subunit beta (468 aa).

An ATP-binding site is contributed by 155–162 (GGAGVGKT).

The protein belongs to the ATPase alpha/beta chains family. As to quaternary structure, F-type ATPases have 2 components, CF(1) - the catalytic core - and CF(0) - the membrane proton channel. CF(1) has five subunits: alpha(3), beta(3), gamma(1), delta(1), epsilon(1). CF(0) has three main subunits: a(1), b(2) and c(9-12). The alpha and beta chains form an alternating ring which encloses part of the gamma chain. CF(1) is attached to CF(0) by a central stalk formed by the gamma and epsilon chains, while a peripheral stalk is formed by the delta and b chains.

Its subcellular location is the cell membrane. The catalysed reaction is ATP + H2O + 4 H(+)(in) = ADP + phosphate + 5 H(+)(out). In terms of biological role, produces ATP from ADP in the presence of a proton gradient across the membrane. The catalytic sites are hosted primarily by the beta subunits. This Streptococcus pneumoniae (strain ATCC BAA-255 / R6) protein is ATP synthase subunit beta.